The primary structure comprises 234 residues: MLKTLVTDVDGTITDRRRRINTAAVETIRTLVDAGIEVVLASGNTVCFMDGLCKMVGTDGTIIGENGGVYRRGFSGTLRIPGDQEVCREAFKVLNDYFAGKGVELELYSAQYRFADVAFARNIDPDEARAIIRDHGLPVRVLDTGFAIHLQTPGVSKGTALVELAREMGLSPSEMMAVGDSENDIEMLEAAGIGVAVRNAPVRTLSAADWVSEEGYGDGFVEAVKKYYPYLFSR.

Aspartate 8 serves as the catalytic Nucleophile. Aspartate 8 and aspartate 10 together coordinate Mg(2+). Substrate is bound at residue lysine 157. Mg(2+)-binding residues include aspartate 180 and aspartate 184.

Belongs to the archaeal SPP-like hydrolase family. It depends on Mg(2+) as a cofactor.

It carries out the reaction 2-phosphoglycolate + H2O = glycolate + phosphate. Functionally, catalyzes the dephosphorylation of 2-phosphoglycolate. This Methanoculleus marisnigri (strain ATCC 35101 / DSM 1498 / JR1) protein is Phosphoglycolate phosphatase.